Consider the following 133-residue polypeptide: 14 kDa fatty acid-binding protein (133 aa).

Residues Arg-107 and 127–129 (RNY) each bind (5Z,8Z,11Z,14Z)-eicosatetraenoate. Residues Arg-107 and 127–129 (RNY) contribute to the (9Z)-octadecenoate site.

Belongs to the calycin superfamily. Fatty-acid binding protein (FABP) family. Tubercles, muscle layers and body.

It is found in the cytoplasm. Functionally, may play a role in the transport of fatty acids. Binds various fatty acids, such as arachidonic, oleic, palmitic and linolenic acid (in vitro). The polypeptide is 14 kDa fatty acid-binding protein (Schistosoma mansoni (Blood fluke)).